A 425-amino-acid chain; its full sequence is Glutamyl-tRNA reductase (425 aa).

Substrate is bound by residues 49 to 52 (TCNR), Ser-109, 114 to 116 (EGQ), and Gln-120. Cys-50 serves as the catalytic Nucleophile. 189-194 (GAGKMS) contributes to the NADP(+) binding site.

Belongs to the glutamyl-tRNA reductase family. As to quaternary structure, homodimer.

It carries out the reaction (S)-4-amino-5-oxopentanoate + tRNA(Glu) + NADP(+) = L-glutamyl-tRNA(Glu) + NADPH + H(+). It functions in the pathway porphyrin-containing compound metabolism; protoporphyrin-IX biosynthesis; 5-aminolevulinate from L-glutamyl-tRNA(Glu): step 1/2. It participates in porphyrin-containing compound metabolism; chlorophyll biosynthesis. Its function is as follows. Catalyzes the NADPH-dependent reduction of glutamyl-tRNA(Glu) to glutamate 1-semialdehyde (GSA). The sequence is that of Glutamyl-tRNA reductase from Picosynechococcus sp. (strain ATCC 27264 / PCC 7002 / PR-6) (Agmenellum quadruplicatum).